The sequence spans 600 residues: Methionine--tRNA ligase (600 aa).

Positions 11–21 (PYANGPRHIGH) match the 'HIGH' region motif. 4 residues coordinate Zn(2+): Cys-143, Cys-146, Cys-156, and Cys-159. The 'KMSKS' region signature appears at 351 to 355 (KFSSS). Ser-354 is a binding site for ATP.

The protein belongs to the class-I aminoacyl-tRNA synthetase family. MetG type 1 subfamily. As to quaternary structure, monomer. The cofactor is Zn(2+).

It is found in the cytoplasm. The enzyme catalyses tRNA(Met) + L-methionine + ATP = L-methionyl-tRNA(Met) + AMP + diphosphate. Functionally, is required not only for elongation of protein synthesis but also for the initiation of all mRNA translation through initiator tRNA(fMet) aminoacylation. The sequence is that of Methionine--tRNA ligase from Salinispora arenicola (strain CNS-205).